The chain runs to 64 residues: Large ribosomal subunit protein bL35 (64 aa).

The segment covering 1–26 (MPKMKSHRGASKRFKRTASGKLKRGR) has biased composition (basic residues). Disordered regions lie at residues 1-28 (MPKM…GRAY) and 33-52 (FGNK…MVSS).

The protein belongs to the bacterial ribosomal protein bL35 family.

The protein is Large ribosomal subunit protein bL35 of Exiguobacterium sibiricum (strain DSM 17290 / CCUG 55495 / CIP 109462 / JCM 13490 / 255-15).